Here is a 330-residue protein sequence, read N- to C-terminus: Ketol-acid reductoisomerase (NADP(+)) (330 aa).

The region spanning 3-184 is the KARI N-terminal Rossmann domain; it reads LPVYYDKDID…GGGRMGVLET (182 aa). Residues 26–29, Ser52, and Ser54 each bind NADP(+); that span reads YGVQ. The active site involves His109. Position 135 (Gly135) interacts with NADP(+). Residues 185–329 enclose the KARI C-terminal knotted domain; the sequence is SFKEECESDL…EILRAPFNHK (145 aa). Mg(2+)-binding residues include Asp193, Glu197, Glu229, and Glu233. A substrate-binding site is contributed by Ser254.

Belongs to the ketol-acid reductoisomerase family. It depends on Mg(2+) as a cofactor.

The enzyme catalyses (2R)-2,3-dihydroxy-3-methylbutanoate + NADP(+) = (2S)-2-acetolactate + NADPH + H(+). It carries out the reaction (2R,3R)-2,3-dihydroxy-3-methylpentanoate + NADP(+) = (S)-2-ethyl-2-hydroxy-3-oxobutanoate + NADPH + H(+). The protein operates within amino-acid biosynthesis; L-isoleucine biosynthesis; L-isoleucine from 2-oxobutanoate: step 2/4. Its pathway is amino-acid biosynthesis; L-valine biosynthesis; L-valine from pyruvate: step 2/4. Its function is as follows. Involved in the biosynthesis of branched-chain amino acids (BCAA). Catalyzes an alkyl-migration followed by a ketol-acid reduction of (S)-2-acetolactate (S2AL) to yield (R)-2,3-dihydroxy-isovalerate. In the isomerase reaction, S2AL is rearranged via a Mg-dependent methyl migration to produce 3-hydroxy-3-methyl-2-ketobutyrate (HMKB). In the reductase reaction, this 2-ketoacid undergoes a metal-dependent reduction by NADPH to yield (R)-2,3-dihydroxy-isovalerate. In Helicobacter pylori (strain J99 / ATCC 700824) (Campylobacter pylori J99), this protein is Ketol-acid reductoisomerase (NADP(+)).